Here is a 489-residue protein sequence, read N- to C-terminus: UDP-N-acetylmuramate--L-alanine ligase (489 aa).

Gly130 to Ser136 provides a ligand contact to ATP.

It belongs to the MurCDEF family.

The protein resides in the cytoplasm. The enzyme catalyses UDP-N-acetyl-alpha-D-muramate + L-alanine + ATP = UDP-N-acetyl-alpha-D-muramoyl-L-alanine + ADP + phosphate + H(+). The protein operates within cell wall biogenesis; peptidoglycan biosynthesis. In terms of biological role, cell wall formation. This Corynebacterium efficiens (strain DSM 44549 / YS-314 / AJ 12310 / JCM 11189 / NBRC 100395) protein is UDP-N-acetylmuramate--L-alanine ligase.